Here is a 667-residue protein sequence, read N- to C-terminus: DNA ligase (667 aa).

NAD(+)-binding positions include 34–38 (DYEFD), 83–84 (SL), and glutamate 117. Lysine 119 functions as the N6-AMP-lysine intermediate in the catalytic mechanism. NAD(+) is bound by residues arginine 140, glutamate 176, lysine 289, and lysine 313. Cysteine 407, cysteine 410, cysteine 425, and cysteine 431 together coordinate Zn(2+). The 77-residue stretch at 591 to 667 (QVNRNFEGMS…ISEDEFMGMM (77 aa)) folds into the BRCT domain.

It belongs to the NAD-dependent DNA ligase family. LigA subfamily. Requires Mg(2+) as cofactor. Mn(2+) serves as cofactor.

The catalysed reaction is NAD(+) + (deoxyribonucleotide)n-3'-hydroxyl + 5'-phospho-(deoxyribonucleotide)m = (deoxyribonucleotide)n+m + AMP + beta-nicotinamide D-nucleotide.. In terms of biological role, DNA ligase that catalyzes the formation of phosphodiester linkages between 5'-phosphoryl and 3'-hydroxyl groups in double-stranded DNA using NAD as a coenzyme and as the energy source for the reaction. It is essential for DNA replication and repair of damaged DNA. The chain is DNA ligase from Chlorobium chlorochromatii (strain CaD3).